A 199-amino-acid polypeptide reads, in one-letter code: uncharacterized protein (199 aa).

The segment at 1-41 is disordered; sequence MKFKRDENQNSTHHRGNKNNTNNDDDDKEEEEEIINDTTMP. The span at 23–35 shows a compositional bias: acidic residues; it reads NDDDDKEEEEEII. The next 3 helical transmembrane spans lie at 73 to 93, 96 to 116, and 166 to 186; these read LILDLVGFFTQIIPIFGFAFW, ISTYLIFKVYGSGLHLCVSFL, and IAIAVALIAIYKIISYFSPYL.

It localises to the membrane. This is an uncharacterized protein from Dictyostelium discoideum (Social amoeba).